The chain runs to 169 residues: ATP synthase subunit b (169 aa).

A helical transmembrane segment spans residues 14–34 (TFLAMLISFLILVFILQQVAF).

Belongs to the ATPase B chain family. As to quaternary structure, F-type ATPases have 2 components, F(1) - the catalytic core - and F(0) - the membrane proton channel. F(1) has five subunits: alpha(3), beta(3), gamma(1), delta(1), epsilon(1). F(0) has four main subunits: a(1), b(2) and c(10-14). The alpha and beta chains form an alternating ring which encloses part of the gamma chain. F(1) is attached to F(0) by a central stalk formed by the gamma and epsilon chains, while a peripheral stalk is formed by the delta and b chains.

The protein localises to the cell membrane. In terms of biological role, f(1)F(0) ATP synthase produces ATP from ADP in the presence of a proton or sodium gradient. F-type ATPases consist of two structural domains, F(1) containing the extramembraneous catalytic core and F(0) containing the membrane proton channel, linked together by a central stalk and a peripheral stalk. During catalysis, ATP synthesis in the catalytic domain of F(1) is coupled via a rotary mechanism of the central stalk subunits to proton translocation. Its function is as follows. Component of the F(0) channel, it forms part of the peripheral stalk, linking F(1) to F(0). This chain is ATP synthase subunit b, found in Heliobacterium modesticaldum (strain ATCC 51547 / Ice1).